Reading from the N-terminus, the 210-residue chain is Neuroendocrine protein 7B2 (210 aa).

An N-terminal signal peptide occupies residues 1 to 24 (MTSRMAILSGLLFWLLLEWNPAFA). A disulfide bond links cysteine 118 and cysteine 128. Residues serine 139 and serine 203 each carry the phosphoserine modification.

The protein belongs to the 7B2 family. As to quaternary structure, interacts with PCSK2/PC2 early in the secretory pathway. Dissociation occurs at later stages. Post-translationally, proteolytically cleaved in the Golgi by a furin-like convertase to generate bioactive peptides. Sulfated on tyrosine residues.

The protein localises to the secreted. Functionally, acts as a molecular chaperone for PCSK2/PC2, preventing its premature activation in the regulated secretory pathway. Binds to inactive PCSK2 in the endoplasmic reticulum and facilitates its transport from there to later compartments of the secretory pathway where it is proteolytically matured and activated. Also required for cleavage of PCSK2 but does not appear to be involved in its folding. Plays a role in regulating pituitary hormone secretion. The C-terminal peptide inhibits PCSK2 in vitro. This Rattus norvegicus (Rat) protein is Neuroendocrine protein 7B2 (Scg5).